A 198-amino-acid polypeptide reads, in one-letter code: Probable GTP-binding protein EngB (198 aa).

The 163-residue stretch at S36–E198 folds into the EngB-type G domain. GTP-binding positions include G44–S51, G70–L74, D88–G91, N155–D158, and I182–A184. Mg(2+) contacts are provided by S51 and T72.

This sequence belongs to the TRAFAC class TrmE-Era-EngA-EngB-Septin-like GTPase superfamily. EngB GTPase family. The cofactor is Mg(2+).

Its function is as follows. Necessary for normal cell division and for the maintenance of normal septation. In Mesomycoplasma hyopneumoniae (strain 232) (Mycoplasma hyopneumoniae), this protein is Probable GTP-binding protein EngB.